Reading from the N-terminus, the 199-residue chain is Small heat shock protein hspG4 (199 aa).

The region spanning 30–199 (NKRVDIIPSM…SSNTIKININ (170 aa)) is the sHSP domain. Positions 83–105 (KNQQQQQQQQQLENSNNKENDEP) are disordered.

It belongs to the small heat shock protein (HSP20) family.

This chain is Small heat shock protein hspG4 (hspG4), found in Dictyostelium discoideum (Social amoeba).